We begin with the raw amino-acid sequence, 122 residues long: Small ribosomal subunit protein uS13c (122 aa).

The protein belongs to the universal ribosomal protein uS13 family. In terms of assembly, part of the 30S ribosomal subunit.

The protein localises to the plastid. Its subcellular location is the chloroplast. Its function is as follows. Located at the top of the head of the 30S subunit, it contacts several helices of the 16S rRNA. This Cyanidium caldarium (Red alga) protein is Small ribosomal subunit protein uS13c.